A 494-amino-acid polypeptide reads, in one-letter code: UDP-N-acetylmuramoyl-L-alanyl-D-glutamate--2,6-diaminopimelate ligase (494 aa).

Serine 32 is a binding site for UDP-N-acetyl-alpha-D-muramoyl-L-alanyl-D-glutamate. 112 to 118 (GTNGKTT) is a binding site for ATP. Residues asparagine 153, 154-155 (TT), serine 181, and arginine 189 contribute to the UDP-N-acetyl-alpha-D-muramoyl-L-alanyl-D-glutamate site. The residue at position 221 (lysine 221) is an N6-carboxylysine. Meso-2,6-diaminopimelate is bound by residues arginine 383, 407–410 (DNPR), glycine 459, and glutamate 463. The Meso-diaminopimelate recognition motif signature appears at 407–410 (DNPR).

This sequence belongs to the MurCDEF family. MurE subfamily. Mg(2+) serves as cofactor. Post-translationally, carboxylation is probably crucial for Mg(2+) binding and, consequently, for the gamma-phosphate positioning of ATP.

The protein resides in the cytoplasm. The enzyme catalyses UDP-N-acetyl-alpha-D-muramoyl-L-alanyl-D-glutamate + meso-2,6-diaminopimelate + ATP = UDP-N-acetyl-alpha-D-muramoyl-L-alanyl-gamma-D-glutamyl-meso-2,6-diaminopimelate + ADP + phosphate + H(+). It functions in the pathway cell wall biogenesis; peptidoglycan biosynthesis. In terms of biological role, catalyzes the addition of meso-diaminopimelic acid to the nucleotide precursor UDP-N-acetylmuramoyl-L-alanyl-D-glutamate (UMAG) in the biosynthesis of bacterial cell-wall peptidoglycan. The sequence is that of UDP-N-acetylmuramoyl-L-alanyl-D-glutamate--2,6-diaminopimelate ligase from Solibacter usitatus (strain Ellin6076).